The primary structure comprises 250 residues: Beta-crystallin B1 (250 aa).

A compositionally biased stretch (polar residues) spans Met1–Val13. Residues Met1 to Val49 are disordered. Ser2 bears the N-acetylserine mark. The tract at residues Ser2–Ser56 is N-terminal arm. Pro residues predominate over residues Gly28 to Val42. Beta/gamma crystallin 'Greek key' domains are found at residues Tyr57–Ser96 and Gly97–Arg141. Positions Met142–Glu146 are connecting peptide. Beta/gamma crystallin 'Greek key' domains follow at residues His147 to Gly188 and Gly189 to Arg231. Positions Arg233–Lys250 are C-terminal arm.

This sequence belongs to the beta/gamma-crystallin family. In terms of assembly, homo/heterodimer, or complexes of higher-order. The structure of beta-crystallin oligomers seems to be stabilized through interactions between the N-terminal arms. Specific cleavages in the N-terminal arm occur during lens maturation and give rise to truncated forms, leading to impaired oligomerization and protein insolubilization. The protease responsible for this partial degradation could be calpain II.

Functionally, crystallins are the dominant structural components of the vertebrate eye lens. This is Beta-crystallin B1 (Crybb1) from Mus musculus (Mouse).